A 140-amino-acid chain; its full sequence is Anti-sigma F factor (140 aa).

The protein belongs to the anti-sigma-factor family.

It carries out the reaction L-seryl-[protein] + ATP = O-phospho-L-seryl-[protein] + ADP + H(+). It catalyses the reaction L-threonyl-[protein] + ATP = O-phospho-L-threonyl-[protein] + ADP + H(+). Its function is as follows. Binds to sigma F and blocks its ability to form an RNA polymerase holoenzyme (E-sigma F). Phosphorylates SpoIIAA on a serine residue. This phosphorylation may enable SpoIIAA to act as an anti-anti-sigma factor that counteracts SpoIIAB and thus releases sigma F from inhibition. The sequence is that of Anti-sigma F factor from Clostridium perfringens (strain SM101 / Type A).